The primary structure comprises 237 residues: Ribose-5-phosphate isomerase A (237 aa).

Substrate-binding positions include 33–36 (TGST), 90–93 (DGAD), and 103–106 (KGGG). The active-site Proton acceptor is Glu112. Lys130 lines the substrate pocket.

It belongs to the ribose 5-phosphate isomerase family. As to quaternary structure, homodimer.

The catalysed reaction is aldehydo-D-ribose 5-phosphate = D-ribulose 5-phosphate. The protein operates within carbohydrate degradation; pentose phosphate pathway; D-ribose 5-phosphate from D-ribulose 5-phosphate (non-oxidative stage): step 1/1. In terms of biological role, catalyzes the reversible conversion of ribose-5-phosphate to ribulose 5-phosphate. The polypeptide is Ribose-5-phosphate isomerase A (Gloeothece citriformis (strain PCC 7424) (Cyanothece sp. (strain PCC 7424))).